The primary structure comprises 119 residues: MIPGRMNSREMRRLMAQMGIKSTEMDDVKKVIFVGKEKDYVIENAQVTMIEAQGVKTFQVVGDFRETPKKQEGKKEETFPEDDIKLVMDQTGVAREKAIEALKAASGEPAQAILNLTQK.

In terms of domain architecture, NAC-A/B spans 5–73 (RMNSREMRRL…FRETPKKQEG (69 aa)).

It belongs to the NAC-alpha family. Homodimer. Interacts with the ribosome. Binds ribosomal RNA.

In terms of biological role, contacts the emerging nascent chain on the ribosome. The polypeptide is Nascent polypeptide-associated complex protein (Thermoplasma volcanium (strain ATCC 51530 / DSM 4299 / JCM 9571 / NBRC 15438 / GSS1)).